The sequence spans 361 residues: 1-deoxy-D-xylulose 5-phosphate reductoisomerase (361 aa).

Residues threonine 12, glycine 13, serine 14, isoleucine 15, glycine 38, and asparagine 102 each contribute to the NADPH site. Lysine 103 lines the 1-deoxy-D-xylulose 5-phosphate pocket. NADPH is bound at residue glutamate 104. Aspartate 126 contributes to the Mn(2+) binding site. Serine 127, glutamate 128, serine 152, and histidine 175 together coordinate 1-deoxy-D-xylulose 5-phosphate. Glutamate 128 contributes to the Mn(2+) binding site. Glycine 181 serves as a coordination point for NADPH. 1-deoxy-D-xylulose 5-phosphate-binding residues include serine 188, asparagine 193, lysine 194, and glutamate 197. Glutamate 197 is a binding site for Mn(2+).

This sequence belongs to the DXR family. Mg(2+) serves as cofactor. The cofactor is Mn(2+).

The enzyme catalyses 2-C-methyl-D-erythritol 4-phosphate + NADP(+) = 1-deoxy-D-xylulose 5-phosphate + NADPH + H(+). The protein operates within isoprenoid biosynthesis; isopentenyl diphosphate biosynthesis via DXP pathway; isopentenyl diphosphate from 1-deoxy-D-xylulose 5-phosphate: step 1/6. Functionally, catalyzes the NADPH-dependent rearrangement and reduction of 1-deoxy-D-xylulose-5-phosphate (DXP) to 2-C-methyl-D-erythritol 4-phosphate (MEP). This Leifsonia xyli subsp. xyli (strain CTCB07) protein is 1-deoxy-D-xylulose 5-phosphate reductoisomerase.